We begin with the raw amino-acid sequence, 864 residues long: Leucine--tRNA ligase (864 aa).

Residues 42–52 (PYPSGKLHMGH) carry the 'HIGH' region motif. Residues 624 to 628 (KMSKS) carry the 'KMSKS' region motif. ATP is bound at residue Lys627.

This sequence belongs to the class-I aminoacyl-tRNA synthetase family.

It is found in the cytoplasm. The catalysed reaction is tRNA(Leu) + L-leucine + ATP = L-leucyl-tRNA(Leu) + AMP + diphosphate. The polypeptide is Leucine--tRNA ligase (Burkholderia ambifaria (strain MC40-6)).